A 229-amino-acid polypeptide reads, in one-letter code: tRNA (guanosine(18)-2'-O)-methyltransferase (229 aa).

S-adenosyl-L-methionine is bound by residues Thr-96, Ile-139, and Leu-148.

It belongs to the class IV-like SAM-binding methyltransferase superfamily. RNA methyltransferase TrmH family.

The enzyme catalyses guanosine(18) in tRNA + S-adenosyl-L-methionine = 2'-O-methylguanosine(18) in tRNA + S-adenosyl-L-homocysteine + H(+). In terms of biological role, catalyzes the 2'-O methylation of guanosine at position 18 in tRNA. The polypeptide is tRNA (guanosine(18)-2'-O)-methyltransferase (Escherichia coli O157:H7).